We begin with the raw amino-acid sequence, 141 residues long: Hemoglobin subunit alpha-D (141 aa).

Residues 1 to 141 (MLTAEDKKLI…VSAVLAEKYR (141 aa)) form the Globin domain. Positions 58 and 87 each coordinate heme b.

This sequence belongs to the globin family. Heterotetramer of two alpha-D chains and two beta chains. In terms of tissue distribution, red blood cells.

Functionally, involved in oxygen transport from the lung to the various peripheral tissues. This Meleagris gallopavo (Wild turkey) protein is Hemoglobin subunit alpha-D (HBAD).